Consider the following 301-residue polypeptide: tRNA dimethylallyltransferase (301 aa).

Glycine 9–serine 16 serves as a coordination point for ATP. Residue threonine 11–serine 16 coordinates substrate. The interval aspartate 34–glutamine 37 is interaction with substrate tRNA.

This sequence belongs to the IPP transferase family. Monomer. Mg(2+) is required as a cofactor.

It catalyses the reaction adenosine(37) in tRNA + dimethylallyl diphosphate = N(6)-dimethylallyladenosine(37) in tRNA + diphosphate. Catalyzes the transfer of a dimethylallyl group onto the adenine at position 37 in tRNAs that read codons beginning with uridine, leading to the formation of N6-(dimethylallyl)adenosine (i(6)A). The sequence is that of tRNA dimethylallyltransferase from Corynebacterium efficiens (strain DSM 44549 / YS-314 / AJ 12310 / JCM 11189 / NBRC 100395).